The sequence spans 363 residues: Phosphate acyltransferase (363 aa).

The segment at 326–363 (ADSHPSKVNAGENAPPLASASNPSPEALPVGSLDRVEG) is disordered. Over residues 337–354 (ENAPPLASASNPSPEALP) the composition is skewed to low complexity.

Belongs to the PlsX family. As to quaternary structure, homodimer. Probably interacts with PlsY.

The protein resides in the cytoplasm. The catalysed reaction is a fatty acyl-[ACP] + phosphate = an acyl phosphate + holo-[ACP]. It participates in lipid metabolism; phospholipid metabolism. Its function is as follows. Catalyzes the reversible formation of acyl-phosphate (acyl-PO(4)) from acyl-[acyl-carrier-protein] (acyl-ACP). This enzyme utilizes acyl-ACP as fatty acyl donor, but not acyl-CoA. The chain is Phosphate acyltransferase from Synechococcus sp. (strain JA-3-3Ab) (Cyanobacteria bacterium Yellowstone A-Prime).